A 1043-amino-acid chain; its full sequence is Liprin-alpha-4 (1043 aa).

Coiled coils occupy residues 24–332 (EKVR…GRGG) and 426–470 (ILDA…RVTS). The tract at residues 498–617 (SASPPLSGRS…AKRKGIKSSI (120 aa)) is disordered. Serine 500 bears the Phosphoserine mark. Residues 505–516 (GRSTPKLTSRSA) are compositionally biased toward polar residues. The residue at position 541 (serine 541) is a Phosphoserine. Residues 544 to 555 (SREENREDKATI) show a composition bias toward basic and acidic residues. Over residues 590-602 (QDSNPSSSNSSQD) the composition is skewed to low complexity. SAM domains lie at 688 to 754 (WDGP…MVSL), 803 to 867 (NHEW…LKRL), and 891 to 960 (WTND…LLAL). Positions 864 to 890 (LKRLNYDRKELEKRREESQHEIKDVLV) form a coiled coil.

It belongs to the liprin family. Liprin-alpha subfamily. In terms of assembly, forms homodimers and heterodimers with liprins-alpha and liprins-beta. Interacts with the second PTPase domain of PTPRD, PTPRF and PTPRS. Interacts with RIMS1 and RIMS2. Interacts with GIT1 and GIT2. Interacts with GRIP1. Interacts with KIF1A.

It localises to the cytoplasm. The protein resides in the cell surface. In terms of biological role, may regulate the disassembly of focal adhesions. May localize receptor-like tyrosine phosphatases type 2A at specific sites on the plasma membrane, possibly regulating their interaction with the extracellular environment and their association with substrates. This Rattus norvegicus (Rat) protein is Liprin-alpha-4 (Ppfia4).